The following is a 221-amino-acid chain: Adenylate kinase (221 aa).

10–15 (GAGKGT) provides a ligand contact to ATP. The interval 30–59 (STGDMLRAAVKAGTPLGLEAKRFMDAGELV) is NMP. Residues Thr31, Arg36, 57 to 59 (ELV), 85 to 88 (GFPR), and Gln92 contribute to the AMP site. The LID stretch occupies residues 122 to 159 (GRRSHAASGRTYHVKFNPPKVEGLDDVTGEPLIQRDDD). ATP contacts are provided by residues Arg123 and 132–133 (TY). Residues Arg156 and Arg167 each coordinate AMP. Residue Gly207 participates in ATP binding.

Belongs to the adenylate kinase family. As to quaternary structure, monomer.

The protein resides in the cytoplasm. The catalysed reaction is AMP + ATP = 2 ADP. The protein operates within purine metabolism; AMP biosynthesis via salvage pathway; AMP from ADP: step 1/1. In terms of biological role, catalyzes the reversible transfer of the terminal phosphate group between ATP and AMP. Plays an important role in cellular energy homeostasis and in adenine nucleotide metabolism. In Paraburkholderia xenovorans (strain LB400), this protein is Adenylate kinase.